We begin with the raw amino-acid sequence, 392 residues long: Protein FAM185A (392 aa).

A disordered region spans residues Tyr39–Gly60.

This chain is Protein FAM185A (FAM185A), found in Homo sapiens (Human).